The sequence spans 316 residues: Adenine deaminase (316 aa).

Zn(2+)-binding residues include His-14, His-16, and His-194. Glu-197 acts as the Proton donor in catalysis. Asp-275 is a Zn(2+) binding site. Asp-276 is a substrate binding site.

It belongs to the metallo-dependent hydrolases superfamily. Adenosine and AMP deaminases family. Adenine deaminase type 2 subfamily. The cofactor is Zn(2+).

The catalysed reaction is adenine + H2O + H(+) = hypoxanthine + NH4(+). Catalyzes the hydrolytic deamination of adenine to hypoxanthine. Plays an important role in the purine salvage pathway and in nitrogen catabolism. In Pseudomonas paraeruginosa (strain DSM 24068 / PA7) (Pseudomonas aeruginosa (strain PA7)), this protein is Adenine deaminase.